The following is an 861-amino-acid chain: Leucine--tRNA ligase (861 aa).

Positions 42–52 (PYPSGKLHMGH) match the 'HIGH' region motif. Residues 620-624 (KMSKS) carry the 'KMSKS' region motif. Lys-623 lines the ATP pocket.

Belongs to the class-I aminoacyl-tRNA synthetase family.

Its subcellular location is the cytoplasm. The enzyme catalyses tRNA(Leu) + L-leucine + ATP = L-leucyl-tRNA(Leu) + AMP + diphosphate. This Hahella chejuensis (strain KCTC 2396) protein is Leucine--tRNA ligase.